A 64-amino-acid chain; its full sequence is H/ACA ribonucleoprotein complex subunit 3 (64 aa).

The protein belongs to the NOP10 family. As to quaternary structure, component of the box H/ACA small nucleolar ribonucleoprotein (H/ACA snoRNP) complex consisting of Nop60B, Gar1, NPH2 and Nop10, and associated with H/ACA-type snoRNAs.

The protein resides in the nucleus. It localises to the nucleolus. In terms of biological role, component of the box H/ACA small nucleolar ribonucleoprotein (H/ACA snoRNP) complex, which catalyzes pseudouridylation of rRNA. This involves the isomerization of uridine such that the ribose is subsequently attached to C5, instead of the normal N1. Pseudouridine ('psi') residues may serve to stabilize the conformation of rRNAs. Required for ribosome biogenesis. H/ACA snoRNP complex-dependent ribosome biogenesis is important in female germline cell differentiation during oogenesis. This chain is H/ACA ribonucleoprotein complex subunit 3, found in Drosophila melanogaster (Fruit fly).